The following is a 501-amino-acid chain: Aldehyde dehydrogenase 1A1 (501 aa).

Serine 2 carries the post-translational modification N-acetylserine. Lysine 91 and lysine 128 each carry N6-acetyllysine. NAD(+) is bound by residues 167 to 170 (IPWN), 193 to 196 (KPAE), 226 to 227 (GP), and 246 to 247 (GS). Position 252 is an N6-acetyllysine (lysine 252). The Proton acceptor role is filled by glutamate 269. 269–271 (ELG) lines the NAD(+) pocket. Residue cysteine 303 is the Nucleophile of the active site. The mediates interaction with PRMT3 stretch occupies residues 336–501 (LTPGATQGPQ…VTVKISQKNS (166 aa)). Threonine 337 carries the phosphothreonine modification. Residue 349 to 353 (EQYDK) participates in NAD(+) binding. An N6-acetyllysine mark is found at lysine 353 and lysine 367. 400–402 (EIF) contacts NAD(+). Lysine 410 bears the N6-acetyllysine mark. Serine 413 carries the post-translational modification Phosphoserine. N6-acetyllysine is present on residues lysine 419 and lysine 495.

It belongs to the aldehyde dehydrogenase family. As to quaternary structure, homotetramer. Interacts with PRMT3; the interaction is direct, inhibits ALDH1A1 aldehyde dehydrogenase activity and is independent of the methyltransferase activity of PRMT3. The N-terminus is blocked most probably by acetylation.

It is found in the cytoplasm. The protein resides in the cytosol. It localises to the cell projection. Its subcellular location is the axon. The catalysed reaction is an aldehyde + NAD(+) + H2O = a carboxylate + NADH + 2 H(+). It carries out the reaction all-trans-retinal + NAD(+) + H2O = all-trans-retinoate + NADH + 2 H(+). It catalyses the reaction 9-cis-retinal + NAD(+) + H2O = 9-cis-retinoate + NADH + 2 H(+). The enzyme catalyses 11-cis-retinal + NAD(+) + H2O = 11-cis-retinoate + NADH + 2 H(+). The catalysed reaction is 13-cis-retinal + NAD(+) + H2O = 13-cis-retinoate + NADH + 2 H(+). It carries out the reaction 3-deoxyglucosone + NAD(+) + H2O = 2-dehydro-3-deoxy-D-gluconate + NADH + 2 H(+). It catalyses the reaction (E)-4-hydroxynon-2-enal + NAD(+) + H2O = (E)-4-hydroxynon-2-enoate + NADH + 2 H(+). The enzyme catalyses malonaldehyde + NAD(+) + H2O = 3-oxopropanoate + NADH + 2 H(+). The catalysed reaction is hexanal + NAD(+) + H2O = hexanoate + NADH + 2 H(+). It carries out the reaction propanal + NAD(+) + H2O = propanoate + NADH + 2 H(+). It catalyses the reaction acetaldehyde + NAD(+) + H2O = acetate + NADH + 2 H(+). The enzyme catalyses benzaldehyde + NAD(+) + H2O = benzoate + NADH + 2 H(+). The catalysed reaction is 4-aminobutanal + NAD(+) + H2O = 4-aminobutanoate + NADH + 2 H(+). It participates in cofactor metabolism; retinol metabolism. Its function is as follows. Cytosolic dehydrogenase that catalyzes the irreversible oxidation of a wide range of aldehydes to their corresponding carboxylic acid. Functions downstream of retinol dehydrogenases and catalyzes the oxidation of retinaldehyde into retinoic acid, the second step in the oxidation of retinol/vitamin A into retinoic acid. This pathway is crucial to control the levels of retinol and retinoic acid, two important molecules which excess can be teratogenic and cytotoxic. Also oxidizes aldehydes resulting from lipid peroxidation like (E)-4-hydroxynon-2-enal/HNE, malonaldehyde and hexanal that form protein adducts and are highly cytotoxic. By participating for instance to the clearance of (E)-4-hydroxynon-2-enal/HNE in the lens epithelium prevents the formation of HNE-protein adducts and lens opacification. Also functions downstream of fructosamine-3-kinase in the fructosamine degradation pathway by catalyzing the oxidation of 3-deoxyglucosone, the carbohydrate product of fructosamine 3-phosphate decomposition, which is itself a potent glycating agent that may react with lysine and arginine side-chains of proteins. Also has an aminobutyraldehyde dehydrogenase activity and is probably part of an alternative pathway for the biosynthesis of GABA/4-aminobutanoate in midbrain, thereby playing a role in GABAergic synaptic transmission. The chain is Aldehyde dehydrogenase 1A1 from Macaca fascicularis (Crab-eating macaque).